The primary structure comprises 409 residues: 4-hydroxy-3-methylbut-2-en-1-yl diphosphate synthase (ferredoxin) (409 aa).

The segment covering 1 to 12 (MQTLDRPNAPTQ) has biased composition (polar residues). Residues 1-22 (MQTLDRPNAPTQQPYPEPVYPR) form a disordered region. 4 residues coordinate [4Fe-4S] cluster: Cys-314, Cys-317, Cys-348, and Glu-355.

Belongs to the IspG family. [4Fe-4S] cluster serves as cofactor.

It catalyses the reaction (2E)-4-hydroxy-3-methylbut-2-enyl diphosphate + 2 oxidized [2Fe-2S]-[ferredoxin] + H2O = 2-C-methyl-D-erythritol 2,4-cyclic diphosphate + 2 reduced [2Fe-2S]-[ferredoxin] + H(+). The protein operates within isoprenoid biosynthesis; isopentenyl diphosphate biosynthesis via DXP pathway; isopentenyl diphosphate from 1-deoxy-D-xylulose 5-phosphate: step 5/6. In terms of biological role, converts 2C-methyl-D-erythritol 2,4-cyclodiphosphate (ME-2,4cPP) into 1-hydroxy-2-methyl-2-(E)-butenyl 4-diphosphate. The polypeptide is 4-hydroxy-3-methylbut-2-en-1-yl diphosphate synthase (ferredoxin) (Synechococcus sp. (strain JA-2-3B'a(2-13)) (Cyanobacteria bacterium Yellowstone B-Prime)).